The following is a 728-amino-acid chain: Polyphosphate kinase (728 aa).

N57 is a binding site for ATP. 2 residues coordinate Mg(2+): R408 and R438. H468 functions as the Phosphohistidine intermediate in the catalytic mechanism. ATP is bound by residues Y501, R597, and H625. The segment at 694–728 (VQRRPASPEQSQSSQAIFTAQAIAETTEDPELRSV) is disordered. Positions 695–709 (QRRPASPEQSQSSQA) are enriched in low complexity.

The protein belongs to the polyphosphate kinase 1 (PPK1) family. Mg(2+) is required as a cofactor. In terms of processing, an intermediate of this reaction is the autophosphorylated ppk in which a phosphate is covalently linked to a histidine residue through a N-P bond.

It carries out the reaction [phosphate](n) + ATP = [phosphate](n+1) + ADP. In terms of biological role, catalyzes the reversible transfer of the terminal phosphate of ATP to form a long-chain polyphosphate (polyP). This is Polyphosphate kinase from Synechocystis sp. (strain ATCC 27184 / PCC 6803 / Kazusa).